Reading from the N-terminus, the 43-residue chain is Myotoxin-2 (43 aa).

Intrachain disulfides connect Cys-4–Cys-36, Cys-11–Cys-30, and Cys-18–Cys-37.

This sequence belongs to the crotamine-myotoxin family. In terms of assembly, monomer. As to expression, expressed by the venom gland.

It localises to the secreted. Cationic peptide that possesses multiple functions. It acts as a cell-penetrating peptide (CPP), and as a potent voltage-gated potassium channel (Kv) inhibitor. It exhibits antimicrobial activities, hind limb paralysis, and severe muscle necrosis by a non-enzymatic mechanism. The chain is Myotoxin-2 from Crotalus concolor (Midget faded rattlesnake).